Consider the following 412-residue polypeptide: Putative competence-damage inducible protein (412 aa).

It belongs to the CinA family.

The sequence is that of Putative competence-damage inducible protein from Bacillus cereus (strain G9842).